A 181-amino-acid chain; its full sequence is Probable cobalt-precorrin-6B C(15)-methyltransferase (decarboxylating) (181 aa).

S-adenosyl-L-methionine contacts are provided by residues threonine 16, glycine 40–glycine 44, aspartate 61, and alanine 89.

Belongs to the methyltransferase superfamily. Archaeal-type CbiT family.

The enzyme catalyses Co-precorrin-6B + S-adenosyl-L-methionine = Co-precorrin-7 + S-adenosyl-L-homocysteine + CO2. The protein operates within cofactor biosynthesis; adenosylcobalamin biosynthesis; cob(II)yrinate a,c-diamide from sirohydrochlorin (anaerobic route): step 8/10. Catalyzes the methylation of C-15 in cobalt-precorrin-6B followed by the decarboxylation of C-12 to form cobalt-precorrin-7. This Methanococcus maripaludis (strain C6 / ATCC BAA-1332) protein is Probable cobalt-precorrin-6B C(15)-methyltransferase (decarboxylating).